A 438-amino-acid chain; its full sequence is Mitochondrial distribution and morphology protein 12 (438 aa).

Residues 1-438 form the SMP-LTD domain; it reads MSIEVDWAAA…VYPSFWTFLV (438 aa). Disordered regions lie at residues 110 to 154, 185 to 277, and 353 to 379; these read SFSH…TSTL, SDSG…MRER, and GSEQ…KDKE. Polar residues predominate over residues 212-226; it reads DTTNSTSRPSTANTL. Low complexity predominate over residues 227 to 245; sequence PSHPSLGHSGSSGSNPHTS. The span at 354–364 shows a compositional bias: polar residues; it reads SEQSQGSQNPS. Over residues 365–379 the composition is skewed to basic and acidic residues; that stretch reads DDGRPRSGGDQKDKE.

Belongs to the MDM12 family. In terms of assembly, component of the ER-mitochondria encounter structure (ERMES) or MDM complex, composed of mmm1, mdm10, mdm12 and mdm34. A mmm1 homodimer associates with one molecule of mdm12 on each side in a pairwise head-to-tail manner, and the SMP-LTD domains of mmm1 and mdm12 generate a continuous hydrophobic tunnel for phospholipid trafficking.

It localises to the mitochondrion outer membrane. The protein resides in the endoplasmic reticulum membrane. Component of the ERMES/MDM complex, which serves as a molecular tether to connect the endoplasmic reticulum (ER) and mitochondria. Components of this complex are involved in the control of mitochondrial shape and protein biogenesis, and function in nonvesicular lipid trafficking between the ER and mitochondria. Mdm12 is required for the interaction of the ER-resident membrane protein mmm1 and the outer mitochondrial membrane-resident beta-barrel protein mdm10. The mdm12-mmm1 subcomplex functions in the major beta-barrel assembly pathway that is responsible for biogenesis of all mitochondrial outer membrane beta-barrel proteins, and acts in a late step after the SAM complex. The mdm10-mdm12-mmm1 subcomplex further acts in the TOM40-specific pathway after the action of the mdm12-mmm1 complex. Essential for establishing and maintaining the structure of mitochondria and maintenance of mtDNA nucleoids. The chain is Mitochondrial distribution and morphology protein 12 from Penicillium rubens (strain ATCC 28089 / DSM 1075 / NRRL 1951 / Wisconsin 54-1255) (Penicillium chrysogenum).